The primary structure comprises 2059 residues: Desmoplakin-A (2059 aa).

The segment covering 1–11 (MSLSGSQTRLH) has biased composition (polar residues). The tract at residues 1-25 (MSLSGSQTRLHQISRRSSSRPDLTA) is disordered. 2 coiled-coil regions span residues 320-354 (IPQKQESYSKLMSDLEEKEKELNKLKAKVDMLLKN) and 397-453 (FKEA…VQTL). The interval 665-690 (EVSSGKTATGVSSGKTATGVSSGKTS) is disordered. A compositionally biased stretch (low complexity) spans 671-690 (TATGVSSGKTATGVSSGKTS). Coiled-coil stretches lie at residues 1062–1229 (MEEL…AELE) and 1261–1383 (LQQD…LQQR). Plectin repeat units lie at residues 1450–1488 (YLGGSDCIAGIYDEAKDRVMPFYQAMKDGLLRRGTTLEL), 1489–1526 (LEAQAASGFIIDPVNNVCMTVEEAWKRGLVGKEFKDKL), 1564–1602 (LLEAQIASGGIIDPKGSHRIDVEVAYRKGYFDREMNEIL), 1666–1694 (IVDPDTGKEMTVREAYHRELIDYDTFLEL), 1847–1885 (LLEAQVCSGGIINPATGQRLSLKDAVQQSLIDEDMSVKL), and 1923–1961 (FLEFQYLTGGLIEPGTGRRVSIEEAIRKGWLDGKGAQKL). The interval 2008–2059 (KGISSPYNVSSGPSSRSGSRAGSRTGSRSGSRRGSVDYSSSSVSYTFFSSAS) is disordered. A compositionally biased stretch (low complexity) spans 2011–2059 (SSPYNVSSGPSSRSGSRAGSRTGSRSGSRRGSVDYSSSSVSYTFFSSAS).

It belongs to the plakin or cytolinker family.

The protein localises to the cell junction. Its subcellular location is the desmosome. The protein resides in the cell membrane. Functionally, involved in the organization of desmosome cell-cell junctions. Of particular importance in cell adhesion in the skin and during cardiac development. May also play a role in the regulation of Wnt, TGF-beta and Hippo signaling pathways. The sequence is that of Desmoplakin-A from Danio rerio (Zebrafish).